The chain runs to 257 residues: 1-(5-phosphoribosyl)-5-[(5-phosphoribosylamino)methylideneamino] imidazole-4-carboxamide isomerase (257 aa).

Aspartate 8 serves as the catalytic Proton acceptor. The active-site Proton donor is aspartate 129.

This sequence belongs to the HisA/HisF family.

Its subcellular location is the cytoplasm. It carries out the reaction 1-(5-phospho-beta-D-ribosyl)-5-[(5-phospho-beta-D-ribosylamino)methylideneamino]imidazole-4-carboxamide = 5-[(5-phospho-1-deoxy-D-ribulos-1-ylimino)methylamino]-1-(5-phospho-beta-D-ribosyl)imidazole-4-carboxamide. The protein operates within amino-acid biosynthesis; L-histidine biosynthesis; L-histidine from 5-phospho-alpha-D-ribose 1-diphosphate: step 4/9. The polypeptide is 1-(5-phosphoribosyl)-5-[(5-phosphoribosylamino)methylideneamino] imidazole-4-carboxamide isomerase (Trichormus variabilis (strain ATCC 29413 / PCC 7937) (Anabaena variabilis)).